The chain runs to 193 residues: Putative manganese efflux pump MntP (193 aa).

6 helical membrane passes run 8–28 (LLAI…GIIL), 37–57 (LVMA…GWMF), 61–81 (FSHL…AFLG), 109–129 (MAIA…LLGI), 138–158 (PILI…YFGI), and 172–192 (LWGG…HLFL).

This sequence belongs to the MntP (TC 9.B.29) family.

It is found in the cell inner membrane. Probably functions as a manganese efflux pump. This is Putative manganese efflux pump MntP from Bacteroides thetaiotaomicron (strain ATCC 29148 / DSM 2079 / JCM 5827 / CCUG 10774 / NCTC 10582 / VPI-5482 / E50).